We begin with the raw amino-acid sequence, 81 residues long: ATP synthase subunit C, plastid (81 aa).

2 helical membrane-spanning segments follow: residues 3-23 (PLIPAASVIAAGLAVGLASIG) and 61-81 (EALTIYGLVVALALSFANPFI).

The protein belongs to the ATPase C chain family. In terms of assembly, F-type ATPases have 2 components, F(1) - the catalytic core - and F(0) - the membrane proton channel. F(1) has five subunits: alpha(3), beta(3), gamma(1), delta(1), epsilon(1). F(0) has four main subunits: a(1), b(1), b'(1) and c(10-14). The alpha and beta chains form an alternating ring which encloses part of the gamma chain. F(1) is attached to F(0) by a central stalk formed by the gamma and epsilon chains, while a peripheral stalk is formed by the delta, b and b' chains.

The protein resides in the plastid membrane. In terms of biological role, f(1)F(0) ATP synthase produces ATP from ADP in the presence of a proton or sodium gradient. F-type ATPases consist of two structural domains, F(1) containing the extramembraneous catalytic core and F(0) containing the membrane proton channel, linked together by a central stalk and a peripheral stalk. During catalysis, ATP synthesis in the catalytic domain of F(1) is coupled via a rotary mechanism of the central stalk subunits to proton translocation. Its function is as follows. Key component of the F(0) channel; it plays a direct role in translocation across the membrane. A homomeric c-ring of between 10-14 subunits forms the central stalk rotor element with the F(1) delta and epsilon subunits. The chain is ATP synthase subunit C, plastid from Aneura mirabilis (Parasitic liverwort).